Consider the following 244-residue polypeptide: Carboxy-S-adenosyl-L-methionine synthase (244 aa).

S-adenosyl-L-methionine-binding positions include Y40, 65-67 (GCS), 90-91 (DN), N134, and R201.

Belongs to the class I-like SAM-binding methyltransferase superfamily. Cx-SAM synthase family. In terms of assembly, homodimer.

It carries out the reaction prephenate + S-adenosyl-L-methionine = carboxy-S-adenosyl-L-methionine + 3-phenylpyruvate + H2O. Its function is as follows. Catalyzes the conversion of S-adenosyl-L-methionine (SAM) to carboxy-S-adenosyl-L-methionine (Cx-SAM). In Citrifermentans bemidjiense (strain ATCC BAA-1014 / DSM 16622 / JCM 12645 / Bem) (Geobacter bemidjiensis), this protein is Carboxy-S-adenosyl-L-methionine synthase.